A 421-amino-acid chain; its full sequence is Phosphoribosylamine--glycine ligase (421 aa).

In terms of domain architecture, ATP-grasp spans 108–314 (KEIMVKYNVP…FAQNIDDIMM (207 aa)). 134–195 (IEEQGAPIVV…EEFLDGEEFS (62 aa)) is a binding site for ATP. Positions 284 and 286 each coordinate Mg(2+).

Belongs to the GARS family. It depends on Mg(2+) as a cofactor. The cofactor is Mn(2+).

The enzyme catalyses 5-phospho-beta-D-ribosylamine + glycine + ATP = N(1)-(5-phospho-beta-D-ribosyl)glycinamide + ADP + phosphate + H(+). Its pathway is purine metabolism; IMP biosynthesis via de novo pathway; N(1)-(5-phospho-D-ribosyl)glycinamide from 5-phospho-alpha-D-ribose 1-diphosphate: step 2/2. The sequence is that of Phosphoribosylamine--glycine ligase from Streptococcus pyogenes serotype M3 (strain SSI-1).